Here is a 469-residue protein sequence, read N- to C-terminus: Probable NADPH:adrenodoxin oxidoreductase, mitochondrial (469 aa).

The transit peptide at M1–N38 directs the protein to the mitochondrion. FAD contacts are provided by A27, E48, L56, and V92. Residues H164 to V167, R208 to R209, and E220 each bind NADP(+). FAD contacts are provided by residues W375 and G382–I384. Residue G382 participates in NADP(+) binding.

This sequence belongs to the ferredoxin--NADP reductase type 1 family. It depends on FAD as a cofactor.

Its subcellular location is the mitochondrion inner membrane. It carries out the reaction 2 reduced [adrenodoxin] + NADP(+) + H(+) = 2 oxidized [adrenodoxin] + NADPH. Adrenodoxin reductase transfers electrons from NADPH to adrenodoxin, which is involved in heme A biosynthesis and in iron-sulfur cluster assembly. Involved in the electron transfer to heme A synthase etp1(cd), a heme protein that catalyzes the conversion of heme O to heme A. Required for the de novo synthesis of Fe-S clusters on iron sulfur cluster assembly protein isu1. Involved in electron delivery for Fe-S cluster synthesis. Essential for coenzyme Q biosynthesis. May be involved in the electron transfer required for the hydroxylation reaction performed by coq6. May play a role in cellular and mitochondrial iron homeostasis. In Schizosaccharomyces pombe (strain 972 / ATCC 24843) (Fission yeast), this protein is Probable NADPH:adrenodoxin oxidoreductase, mitochondrial (arh1).